The primary structure comprises 196 residues: Probable malonic semialdehyde reductase RutE (196 aa).

Belongs to the nitroreductase family. HadB/RutE subfamily. FMN serves as cofactor.

It catalyses the reaction 3-hydroxypropanoate + NADP(+) = 3-oxopropanoate + NADPH + H(+). In terms of biological role, may reduce toxic product malonic semialdehyde to 3-hydroxypropionic acid, which is excreted. This chain is Probable malonic semialdehyde reductase RutE, found in Escherichia coli (strain K12 / MC4100 / BW2952).